The sequence spans 472 residues: Adenosylhomocysteinase (472 aa).

Residues Thr-62, Asp-137, and Glu-197 each coordinate substrate. 198–200 lines the NAD(+) pocket; sequence TTT. Substrate contacts are provided by Lys-227 and Asp-231. NAD(+) contacts are provided by residues Asn-232, 261-266, Glu-284, Asn-319, 340-342, and Asn-385; these read GYGDVG and IGH.

It belongs to the adenosylhomocysteinase family. The cofactor is NAD(+).

The protein localises to the cytoplasm. It carries out the reaction S-adenosyl-L-homocysteine + H2O = L-homocysteine + adenosine. It functions in the pathway amino-acid biosynthesis; L-homocysteine biosynthesis; L-homocysteine from S-adenosyl-L-homocysteine: step 1/1. Functionally, may play a key role in the regulation of the intracellular concentration of adenosylhomocysteine. This is Adenosylhomocysteinase from Bordetella bronchiseptica (strain ATCC BAA-588 / NCTC 13252 / RB50) (Alcaligenes bronchisepticus).